The sequence spans 212 residues: Probable NADH dehydrogenase [ubiquinone] iron-sulfur protein 8, mitochondrial (212 aa).

2 4Fe-4S ferredoxin-type domains span residues 104 to 133 (RRYP…IEAE) and 143 to 172 (TRYD…EGPN). Positions 113, 116, 119, 123, 152, 155, 158, and 162 each coordinate [4Fe-4S] cluster.

This sequence belongs to the complex I 23 kDa subunit family. Complex I is composed of 45 different subunits This is a component of the iron-sulfur (IP) fragment of the enzyme. Requires [4Fe-4S] cluster as cofactor.

Its subcellular location is the mitochondrion. It carries out the reaction a ubiquinone + NADH + 5 H(+)(in) = a ubiquinol + NAD(+) + 4 H(+)(out). In terms of biological role, core subunit of the mitochondrial membrane respiratory chain NADH dehydrogenase (Complex I) that is believed to belong to the minimal assembly required for catalysis. Complex I functions in the transfer of electrons from NADH to the respiratory chain. The immediate electron acceptor for the enzyme is believed to be ubiquinone. This is Probable NADH dehydrogenase [ubiquinone] iron-sulfur protein 8, mitochondrial from Caenorhabditis elegans.